A 615-amino-acid chain; its full sequence is MSPLASKALRPAATDPASIRNFCIIAHIDHGKSTLADRMLQMTGVVDSRSMRAQYLDRMDIERERGITIKSQAVRMPWELDGQTYALNMIDTPGHVDFSYEVSRSLAACEGAILLVDAAQGIEAQTLANLYLALENDLTIIPVLNKIDLPAADPDKYAAELASLIGGDPSDVLRVSGKTGAGVEDLLDRVSRTIPAPVGDPDAAARAMIFDSVYDAYRGVVTYVRMIDGKLSPREKISMMSTRATHEILEIGVSSPEPTPSDGLGVGEVGYLITGVKDVRQSKVGDTVTTAARPATEALPGYTEPLPMVFSGLYPIDGSDYPDLRDALDKLKLSDAALVYEPETSVALGFGFRCGFLGLLHLEIITERLSREFGLDLITTAPSVIYEVTSEDKKTVTVTNPSEFPGGKIVSVSEPVVKAAILAPKDYVGTIMELCQSRRGILLGMEYLGEDRVEVRYTMPLGEIVFDFFDNLKSKTAGYASLDYEPAGSQDSDLVKVDILLQGEQVDAFSAIVHRDKAYAYGVLMTGRLRELIPRQQFEVPIQAAIGARIIARESIRAMRKDVLAKCYGGDITRKRKLLEKQKEGKKRMKMVGRVEVPQEAFIAALSGDTEKKAK.

One can recognise a tr-type G domain in the interval 17-198; that stretch reads ASIRNFCIIA…RVSRTIPAPV (182 aa). Residues 29–34 and 145–148 contribute to the GTP site; these read DHGKST and NKID.

Belongs to the TRAFAC class translation factor GTPase superfamily. Classic translation factor GTPase family. LepA subfamily.

The protein localises to the cell membrane. It carries out the reaction GTP + H2O = GDP + phosphate + H(+). Its function is as follows. Required for accurate and efficient protein synthesis under certain stress conditions. May act as a fidelity factor of the translation reaction, by catalyzing a one-codon backward translocation of tRNAs on improperly translocated ribosomes. Back-translocation proceeds from a post-translocation (POST) complex to a pre-translocation (PRE) complex, thus giving elongation factor G a second chance to translocate the tRNAs correctly. Binds to ribosomes in a GTP-dependent manner. This is Elongation factor 4 from Clavibacter michiganensis subsp. michiganensis (strain NCPPB 382).